The following is a 142-amino-acid chain: Ovocleidin-17 (142 aa).

3 disulfides stabilise this stretch: C5-C16, C33-C138, and C113-C130. The C-type lectin domain occupies 12–139; it reads TPGGCLGFFS…CTERNAFVCK (128 aa). N59 is a glycosylation site (N-linked (GlcNAc...) asparagine). S61 and S67 each carry phosphoserine.

As to expression, expressed in the shell gland mucosa. Not detected in hen liver, magnum, isthmus, cartilage, bone or in egg white or yolk.

It localises to the secreted. The protein resides in the extracellular space. It is found in the extracellular matrix. In terms of biological role, may form proteinaceous networks during the construction of the eggshell which then may control the deposition of the mineral phase. This chain is Ovocleidin-17, found in Gallus gallus (Chicken).